Consider the following 198-residue polypeptide: Nucleoid occlusion factor SlmA (198 aa).

In terms of domain architecture, HTH tetR-type spans N10–L70. Positions T33–F52 form a DNA-binding region, H-T-H motif. The stretch at E117–M145 forms a coiled coil.

Belongs to the nucleoid occlusion factor SlmA family. As to quaternary structure, homodimer. Interacts with FtsZ.

Its subcellular location is the cytoplasm. It localises to the nucleoid. Required for nucleoid occlusion (NO) phenomenon, which prevents Z-ring formation and cell division over the nucleoid. Acts as a DNA-associated cell division inhibitor that binds simultaneously chromosomal DNA and FtsZ, and disrupts the assembly of FtsZ polymers. SlmA-DNA-binding sequences (SBS) are dispersed on non-Ter regions of the chromosome, preventing FtsZ polymerization at these regions. The chain is Nucleoid occlusion factor SlmA from Klebsiella pneumoniae subsp. pneumoniae (strain ATCC 700721 / MGH 78578).